Reading from the N-terminus, the 267-residue chain is Regulatory protein RecX (267 aa).

Belongs to the RecX family.

The protein resides in the cytoplasm. Functionally, modulates RecA activity. The protein is Regulatory protein RecX of Staphylococcus epidermidis (strain ATCC 12228 / FDA PCI 1200).